Here is a 481-residue protein sequence, read N- to C-terminus: Argininosuccinate lyase (481 aa).

Residues 1 to 17 (MKNAPVDTQSDAATSFE) are compositionally biased toward polar residues. Residues 1 to 25 (MKNAPVDTQSDAATSFEGTAANPQW) form a disordered region.

Belongs to the lyase 1 family. Argininosuccinate lyase subfamily.

The protein resides in the cytoplasm. It carries out the reaction 2-(N(omega)-L-arginino)succinate = fumarate + L-arginine. The protein operates within amino-acid biosynthesis; L-arginine biosynthesis; L-arginine from L-ornithine and carbamoyl phosphate: step 3/3. The chain is Argininosuccinate lyase from Gluconobacter oxydans (strain 621H) (Gluconobacter suboxydans).